We begin with the raw amino-acid sequence, 136 residues long: D-ribose pyranase (136 aa).

His20 functions as the Proton donor in the catalytic mechanism. Substrate contacts are provided by residues Asp28, His98, and 120-122; that span reads YAN.

The protein belongs to the RbsD / FucU family. RbsD subfamily. As to quaternary structure, homodecamer.

It localises to the cytoplasm. The catalysed reaction is beta-D-ribopyranose = beta-D-ribofuranose. It functions in the pathway carbohydrate metabolism; D-ribose degradation; D-ribose 5-phosphate from beta-D-ribopyranose: step 1/2. Its function is as follows. Catalyzes the interconversion of beta-pyran and beta-furan forms of D-ribose. This chain is D-ribose pyranase, found in Geobacillus kaustophilus (strain HTA426).